A 206-amino-acid chain; its full sequence is Transcription antitermination protein NusB (206 aa).

The interval 135–206 (ARGEKTSAQE…ETQPPGVNEV (72 aa)) is disordered. Residues 169 to 180 (ATPATTPVTTTV) are compositionally biased toward low complexity.

It belongs to the NusB family.

Involved in transcription antitermination. Required for transcription of ribosomal RNA (rRNA) genes. Binds specifically to the boxA antiterminator sequence of the ribosomal RNA (rrn) operons. The polypeptide is Transcription antitermination protein NusB (Heliobacterium modesticaldum (strain ATCC 51547 / Ice1)).